The sequence spans 560 residues: MSRKLFASILIGALLGIGAPPSAHAGADDVVDSSKSFVMENFSSYHGTKPGYVDSIQKGIQKPKSGTQGNYDDDWKGFYSTDNKYDAAGYSVDNENPLSGKAGDVVKVTYPGLTKVLALKVDNAETIKKELGLSLTEPLMEQVGTEEFIKRFGDGASRVVLSLPFAEGSSSVEYINNWEQAKALSVKLEINFETRGKRGQDAMYEYMAQACAGNRVRRSVGGSLSCINLDWDVIRDKTKTKIESLKEHGPIKNKMSESPNKTVSEEKAKQYLEEFHQTALEHPELSELKTVTGTNRVFAGANYAAWAVNVAQVIDSETADNLEKTTAALSILPGIGSVMGIADGAVHHNTEEIVAQSIALSSLMVAQAIPLVGELVDIGFAAYNFVESIINLFQVVHNSYNRSAYSPGHKTQPFLHDGYAVSWNTVEDSIIRTGFQGESGHDIKITAENTPLPIASVLLPTIPGKLDVNKSKTHISVNGRKIRMRCRAIDGDVTFCRPKSPVYVGNGVHANLHVAFHRSSSEKIHSNEISSDSIGVLGYQKTVDHTKVNSKLSLFFEIKS.

The first 25 residues, 1-25 (MSRKLFASILIGALLGIGAPPSAHA), serve as a signal peptide directing secretion. The NAD(+) site is built by H46 and Y90. E173 is an active-site residue. 2 cysteine pairs are disulfide-bonded: C211–C226 and C486–C496.

The chain is Diphtheria toxin homolog CRM228 from Corynebacterium diphtheriae.